The primary structure comprises 387 residues: 3-ketoacyl-CoA thiolase (387 aa).

The active-site Acyl-thioester intermediate is cysteine 91. Active-site proton acceptor residues include histidine 343 and cysteine 373.

The protein belongs to the thiolase-like superfamily. Thiolase family. As to quaternary structure, heterotetramer of two alpha chains (FadB) and two beta chains (FadA).

It localises to the cytoplasm. The catalysed reaction is an acyl-CoA + acetyl-CoA = a 3-oxoacyl-CoA + CoA. It participates in lipid metabolism; fatty acid beta-oxidation. Its function is as follows. Catalyzes the final step of fatty acid oxidation in which acetyl-CoA is released and the CoA ester of a fatty acid two carbons shorter is formed. This is 3-ketoacyl-CoA thiolase from Shewanella sp. (strain MR-7).